The following is a 357-amino-acid chain: Neurogenic differentiation factor 1 (357 aa).

The interval 1-94 (MTKSYSESGL…GPKKKKMTKA (94 aa)) is disordered. Acidic residues predominate over residues 58–78 (EEEDEDEDLEEEEEEEEEEDD). Basic residues predominate over residues 81-93 (PKRRGPKKKKMTK). A Nuclear localization signal motif is present at residues 87–93 (KKKKMTK). Positions 101 to 153 (LRRMKANARERNRMHGLNAALDNLRKVVPCYSKTQKLSKIETLRLAKNYIWAL) constitute a bHLH domain. A phosphoserine mark is found at Ser-162, Ser-259, Ser-266, and Ser-274. Phosphoserine; by CaMK2 is present on Ser-336.

As to quaternary structure, efficient DNA-binding requires dimerization with another bHLH protein. Heterodimer with TCF3/E47; the heterodimer is inhibited in presence of ID2, but not NR0B2, to E-box element. Interacts with EP300; the interaction is inhibited by NR0B2. Interacts with RREB1. Interacts with ATOH8. Phosphorylated by MAPK1; phosphorylation regulates heterodimerization and DNA-binding activities. Phosphorylation on Ser-266 and Ser-274 increases transactivation on the insulin promoter in glucose-stimulated insulinoma cells. Phosphorylated. In islet cells, phosphorylated on Ser-274 upon glucose stimulation; which may be required for nuclear localization. In activated neurons, phosphorylated on Ser-336 by CaMK2; which promotes dendritic growth.

It is found in the cytoplasm. Its subcellular location is the nucleus. Functionally, acts as a transcriptional activator: mediates transcriptional activation by binding to E box-containing promoter consensus core sequences 5'-CANNTG-3'. Associates with the p300/CBP transcription coactivator complex to stimulate transcription of the secretin gene as well as the gene encoding the cyclin-dependent kinase inhibitor CDKN1A. Contributes to the regulation of several cell differentiation pathways, like those that promote the formation of early retinal ganglion cells, inner ear sensory neurons, granule cells forming either the cerebellum or the dentate gyrus cell layer of the hippocampus, endocrine islet cells of the pancreas and enteroendocrine cells of the small intestine. Together with PAX6 or SIX3, is required for the regulation of amacrine cell fate specification. Also required for dendrite morphogenesis and maintenance in the cerebellar cortex. Associates with chromatin to enhancer regulatory elements in genes encoding key transcriptional regulators of neurogenesis. The sequence is that of Neurogenic differentiation factor 1 (Neurod1) from Rattus norvegicus (Rat).